We begin with the raw amino-acid sequence, 472 residues long: Glutamate--tRNA ligase (472 aa).

The 'HIGH' region signature appears at Pro-10–Gly-20. Zn(2+) contacts are provided by Cys-99, Cys-101, Cys-126, and His-128. Positions Lys-238–Arg-242 match the 'KMSKS' region motif. Lys-241 serves as a coordination point for ATP.

It belongs to the class-I aminoacyl-tRNA synthetase family. Glutamate--tRNA ligase type 1 subfamily. Monomer. Zn(2+) serves as cofactor.

The protein resides in the cytoplasm. It catalyses the reaction tRNA(Glu) + L-glutamate + ATP = L-glutamyl-tRNA(Glu) + AMP + diphosphate. Its function is as follows. Catalyzes the attachment of glutamate to tRNA(Glu) in a two-step reaction: glutamate is first activated by ATP to form Glu-AMP and then transferred to the acceptor end of tRNA(Glu). In Proteus mirabilis (strain HI4320), this protein is Glutamate--tRNA ligase.